The following is a 232-amino-acid chain: MTNADPHELQKFSDLAHRWWDPNAEFKPLHDLNPVRLGWIDAHAHLAGKRALDIGCGGGILSESMAGLGAQVKGIDLSTEALGVADLHSLESGISVDYEAIAAEAIAAREPGTYDVVTCMEMLEHVPSPGDVVAACATLVKPGGWVFFSTLNRNLKSYLFAVIGAEYIAQMLPKGTHDYARFIRPSELAGFVRATDLHIVEIKGITYHPIGKRFALSNDTDINYLVACRRGA.

Residues R36, G55, D76, and M120 each coordinate S-adenosyl-L-methionine.

The protein belongs to the methyltransferase superfamily. UbiG/COQ3 family.

The catalysed reaction is a 3-demethylubiquinol + S-adenosyl-L-methionine = a ubiquinol + S-adenosyl-L-homocysteine + H(+). It catalyses the reaction a 3-(all-trans-polyprenyl)benzene-1,2-diol + S-adenosyl-L-methionine = a 2-methoxy-6-(all-trans-polyprenyl)phenol + S-adenosyl-L-homocysteine + H(+). It participates in cofactor biosynthesis; ubiquinone biosynthesis. In terms of biological role, O-methyltransferase that catalyzes the 2 O-methylation steps in the ubiquinone biosynthetic pathway. The sequence is that of Ubiquinone biosynthesis O-methyltransferase from Burkholderia cenocepacia (strain ATCC BAA-245 / DSM 16553 / LMG 16656 / NCTC 13227 / J2315 / CF5610) (Burkholderia cepacia (strain J2315)).